The chain runs to 396 residues: Elongation factor Tu (396 aa).

One can recognise a tr-type G domain in the interval 10–207 (KPHCNIGTIG…VDAYIPQPPR (198 aa)). The G1 stretch occupies residues 19 to 26 (GHVDHGKT). Residue 19–26 (GHVDHGKT) participates in GTP binding. Residue threonine 26 participates in Mg(2+) binding. Residues 60–64 (GITIS) form a G2 region. The segment at 81–84 (DCPG) is G3. GTP-binding positions include 81-85 (DCPGH) and 136-139 (NKVD). A G4 region spans residues 136–139 (NKVD). Residues 174-176 (SAL) form a G5 region.

Belongs to the TRAFAC class translation factor GTPase superfamily. Classic translation factor GTPase family. EF-Tu/EF-1A subfamily. Monomer.

Its subcellular location is the cytoplasm. It carries out the reaction GTP + H2O = GDP + phosphate + H(+). Its function is as follows. GTP hydrolase that promotes the GTP-dependent binding of aminoacyl-tRNA to the A-site of ribosomes during protein biosynthesis. This chain is Elongation factor Tu, found in Novosphingobium aromaticivorans (strain ATCC 700278 / DSM 12444 / CCUG 56034 / CIP 105152 / NBRC 16084 / F199).